The sequence spans 201 residues: Imidazoleglycerol-phosphate dehydratase (201 aa).

The protein belongs to the imidazoleglycerol-phosphate dehydratase family.

The protein localises to the cytoplasm. The enzyme catalyses D-erythro-1-(imidazol-4-yl)glycerol 3-phosphate = 3-(imidazol-4-yl)-2-oxopropyl phosphate + H2O. It participates in amino-acid biosynthesis; L-histidine biosynthesis; L-histidine from 5-phospho-alpha-D-ribose 1-diphosphate: step 6/9. This chain is Imidazoleglycerol-phosphate dehydratase, found in Prochlorococcus marinus subsp. pastoris (strain CCMP1986 / NIES-2087 / MED4).